A 95-amino-acid polypeptide reads, in one-letter code: Mammaglobin-B (95 aa).

Positions 1 to 18 (MKLLMVLMLAALLLHCYA) are cleaved as a signal peptide. N-linked (GlcNAc...) asparagine glycosylation occurs at N68.

As to quaternary structure, heterodimer of a lipophilin A and a lipophilin C (mammaglobin B) monomer associated head to head. Expressed in thymus, trachea, kidney, steroid responsive tissues (prostate, testis, uterus, breast and ovary) and salivary gland.

The protein resides in the secreted. Its function is as follows. May bind androgens and other steroids, may also bind estramustine, a chemotherapeutic agent used for prostate cancer. May be under transcriptional regulation of steroid hormones. This is Mammaglobin-B (SCGB2A1) from Homo sapiens (Human).